Consider the following 147-residue polypeptide: Ubiquitin-conjugating enzyme E2 D3 (147 aa).

The region spanning 1-147 (MALKRINKEL…SREWTQKYAM (147 aa)) is the UBC core domain. A disulfide bond links Cys21 and Cys107. Cys85 serves as the catalytic Glycyl thioester intermediate.

The protein belongs to the ubiquitin-conjugating enzyme family. As to quaternary structure, interacts with SCF (SKP1-CUL1-F-box protein) E3 ubiquitin ligase complex; when Cullin is neddylated, the interaction between the E2 and the SCF complex is strengthened. Interacts with DAPK3. Interacts with BRCA1; the DNA damage checkpoint promotes the association with BRCA1 after ionizing radiation. Interacts non-covalently with ubiquitin. Interacts with E3 ubiquitin-protein ligase CBLC. Interacts with UBTD1. Interacts with RIGI and RNF135; involved in RIGI ubiquitination and activation. Phosphorylated by AURKB.

The protein localises to the cell membrane. It localises to the endosome membrane. It catalyses the reaction S-ubiquitinyl-[E1 ubiquitin-activating enzyme]-L-cysteine + [E2 ubiquitin-conjugating enzyme]-L-cysteine = [E1 ubiquitin-activating enzyme]-L-cysteine + S-ubiquitinyl-[E2 ubiquitin-conjugating enzyme]-L-cysteine.. It carries out the reaction S-ubiquitinyl-[E1 ubiquitin-activating enzyme]-L-cysteine + [acceptor protein]-L-lysine = [E1 ubiquitin-activating enzyme]-L-cysteine + N(6)-monoubiquitinyl-[acceptor protein]-L-lysine.. The protein operates within protein modification; protein ubiquitination. Accepts ubiquitin from the E1 complex and catalyzes its covalent attachment to other proteins. In vitro catalyzes 'Lys-11'-, as well as 'Lys-48'-linked polyubiquitination. Cooperates with the E2 CDC34 and the SCF(FBXW11) E3 ligase complex for the polyubiquitination of NFKBIA leading to its subsequent proteasomal degradation. Acts as an initiator E2, priming the phosphorylated NFKBIA target at positions 'Lys-21' and/or 'Lys-22' with a monoubiquitin. Ubiquitin chain elongation is then performed by CDC34, building ubiquitin chains from the UBE2D3-primed NFKBIA-linked ubiquitin. Also acts as an initiator E2, in conjunction with RNF8, for the priming of PCNA. Monoubiquitination of PCNA, and its subsequent polyubiquitination, are essential events in the operation of the DNA damage tolerance (DDT) pathway that is activated after DNA damage caused by UV or chemical agents during S-phase. Associates with the BRCA1/BARD1 E3 ligase complex to perform ubiquitination at DNA damage sites following ionizing radiation leading to DNA repair. Targets DAPK3 for ubiquitination which influences promyelocytic leukemia protein nuclear body (PML-NB) formation in the nucleus. In conjunction with the MDM2 and TOPORS E3 ligases, functions ubiquitination of p53/TP53. In conjunction with the CBL E3 ligase, targets EGFR for polyubiquitination at the plasma membrane as well as during its internalization and transport on endosomes. In conjunction with the STUB1 E3 quality control E3 ligase, ubiquitinates unfolded proteins to catalyze their immediate destruction. Together with RNF135, catalyzes the viral RNA-dependent 'Lys-63'-linked polyubiquitination of RIGI to activate the downstream signaling pathway that leads to interferon beta production. Together with ZNF598, catalyzes ubiquitination of 40S ribosomal proteins in response to ribosome collisions. In cooperation with the GATOR2 complex, catalyzes 'Lys-6'-linked ubiquitination of NPRL2. In Homo sapiens (Human), this protein is Ubiquitin-conjugating enzyme E2 D3 (UBE2D3).